A 469-amino-acid polypeptide reads, in one-letter code: ATP synthase subunit beta (469 aa).

Residue 155 to 162 coordinates ATP; it reads GGAGCGKT.

It belongs to the ATPase alpha/beta chains family. F-type ATPases have 2 components, CF(1) - the catalytic core - and CF(0) - the membrane proton channel. CF(1) has five subunits: alpha(3), beta(3), gamma(1), delta(1), epsilon(1). CF(0) has three main subunits: a(1), b(2) and c(9-12). The alpha and beta chains form an alternating ring which encloses part of the gamma chain. CF(1) is attached to CF(0) by a central stalk formed by the gamma and epsilon chains, while a peripheral stalk is formed by the delta and b chains.

The protein resides in the cell inner membrane. It catalyses the reaction ATP + H2O + 4 H(+)(in) = ADP + phosphate + 5 H(+)(out). Functionally, produces ATP from ADP in the presence of a proton gradient across the membrane. The catalytic sites are hosted primarily by the beta subunits. This Syntrophus aciditrophicus (strain SB) protein is ATP synthase subunit beta.